The primary structure comprises 85 residues: Large ribosomal subunit protein bL27 (85 aa).

Positions 1–21 (MAHKKAAGSTKNGRDSNAKRL) are disordered.

This sequence belongs to the bacterial ribosomal protein bL27 family.

The sequence is that of Large ribosomal subunit protein bL27 from Hydrogenovibrio crunogenus (strain DSM 25203 / XCL-2) (Thiomicrospira crunogena).